The sequence spans 207 residues: Urease accessory protein UreG (207 aa).

Position 14 to 21 (14 to 21 (GPVGSGKT)) interacts with GTP.

This sequence belongs to the SIMIBI class G3E GTPase family. UreG subfamily. As to quaternary structure, homodimer. UreD, UreF and UreG form a complex that acts as a GTP-hydrolysis-dependent molecular chaperone, activating the urease apoprotein by helping to assemble the nickel containing metallocenter of UreC. The UreE protein probably delivers the nickel.

It localises to the cytoplasm. Functionally, facilitates the functional incorporation of the urease nickel metallocenter. This process requires GTP hydrolysis, probably effectuated by UreG. The protein is Urease accessory protein UreG of Pseudomonas putida (strain GB-1).